A 101-amino-acid polypeptide reads, in one-letter code: MAKLSLIQREEKREKLVAKYAKKYAELKATIDDQSKSEEERYAARLALQQLPRNAYPTRLRARCGITGRPRGTFRKFGLGRTKIRELAFRGDIPGVVKASW.

The protein belongs to the universal ribosomal protein uS14 family. Part of the 30S ribosomal subunit. Contacts proteins S3 and S10.

In terms of biological role, binds 16S rRNA, required for the assembly of 30S particles and may also be responsible for determining the conformation of the 16S rRNA at the A site. This is Small ribosomal subunit protein uS14 from Leptothrix cholodnii (strain ATCC 51168 / LMG 8142 / SP-6) (Leptothrix discophora (strain SP-6)).